Consider the following 253-residue polypeptide: Diphthine synthase (253 aa).

Residues Asp-83, Leu-86, Ser-111–Ile-112, Leu-163, and Leu-205 contribute to the S-adenosyl-L-methionine site.

It belongs to the diphthine synthase family. Homodimer.

It carries out the reaction 2-[(3S)-amino-3-carboxypropyl]-L-histidyl-[translation elongation factor 2] + 3 S-adenosyl-L-methionine = diphthine-[translation elongation factor 2] + 3 S-adenosyl-L-homocysteine + 3 H(+). It functions in the pathway protein modification; peptidyl-diphthamide biosynthesis. S-adenosyl-L-methionine-dependent methyltransferase that catalyzes the trimethylation of the amino group of the modified target histidine residue in translation elongation factor 2 (EF-2), to form an intermediate called diphthine. The three successive methylation reactions represent the second step of diphthamide biosynthesis. The chain is Diphthine synthase from Pyrobaculum neutrophilum (strain DSM 2338 / JCM 9278 / NBRC 100436 / V24Sta) (Thermoproteus neutrophilus).